The primary structure comprises 340 residues: NADH-quinone oxidoreductase subunit H 2 (340 aa).

8 helical membrane-spanning segments follow: residues Leu10–Leu30, Phe84–Ile104, Val126–Gly146, Met172–Val192, Val198–Glu218, Val255–Ile275, Met279–Phe299, and Val318–Ala338.

Belongs to the complex I subunit 1 family. In terms of assembly, NDH-1 is composed of 14 different subunits. Subunits NuoA, H, J, K, L, M, N constitute the membrane sector of the complex.

The protein resides in the cell inner membrane. It carries out the reaction a quinone + NADH + 5 H(+)(in) = a quinol + NAD(+) + 4 H(+)(out). In terms of biological role, NDH-1 shuttles electrons from NADH, via FMN and iron-sulfur (Fe-S) centers, to quinones in the respiratory chain. The immediate electron acceptor for the enzyme in this species is believed to be ubiquinone. Couples the redox reaction to proton translocation (for every two electrons transferred, four hydrogen ions are translocated across the cytoplasmic membrane), and thus conserves the redox energy in a proton gradient. This subunit may bind ubiquinone. In Rhizobium etli (strain ATCC 51251 / DSM 11541 / JCM 21823 / NBRC 15573 / CFN 42), this protein is NADH-quinone oxidoreductase subunit H 2.